The following is a 518-amino-acid chain: Triacylglycerol lipase OBL1 (518 aa).

The helical transmembrane segment at 93 to 113 threads the bilayer; it reads GFVVDFFLNLFSANGGFFGLL. The GXSXG motif lies at 337 to 341; sequence GHSLG. The Nucleophile role is filled by Ser-339. Active-site charge relay system residues include Asp-403 and His-496.

It belongs to the AB hydrolase superfamily. Lipase family. Expressed in pollen grains, pollen tubes, developing embryos, developing seeds and germinating seeds.

The protein resides in the lipid droplet. It is found in the membrane. The catalysed reaction is 1,2-di-(9Z-octadecenoyl)-glycerol + (9Z)-octadecenoate + H(+) = 1,2,3-tri-(9Z-octadecenoyl)-glycerol + H2O. It carries out the reaction 1-(9Z-octadecenoyl)-glycerol + H2O = glycerol + (9Z)-octadecenoate + H(+). Acid lipase that can hydrolyze a range of triacylglycerols without a clear preference for acyl-chains. Can also cleave 1,2-diacylglycerol, 1,3-diacylglycerol and 1-monoacylglycerol, but not phosphatidylcholine, phosphatidylethanolamine, or sterol esters. Required for pollen tube growth. Triacylglycerol hydrolysis by OBL1 may provide acyl groups for the synthesis of membrane lipids in growing pollen tubes. This Arabidopsis thaliana (Mouse-ear cress) protein is Triacylglycerol lipase OBL1.